A 108-amino-acid polypeptide reads, in one-letter code: MPKPGILKSKSMFCVIYRSSKRDQTYLYVEKKDDFSRVPEELMKGFGQPQLAMILPLDGRKKLVNADIEKVKQALTEQGYYLQLPPPPEDLLKQHLSVMGQKTHDTNK.

In terms of domain architecture, YcgL spans 12–96; the sequence is MFCVIYRSSK…PPEDLLKQHL (85 aa).

This is Protein YcgL from Escherichia coli O17:K52:H18 (strain UMN026 / ExPEC).